Consider the following 234-residue polypeptide: MTTSDLPAFWTVIPAAGVGSRMRADRPKQYLDLAGRTVIERTLDCFLEHPMLRGLVVCLAEDDPYWPGLDCAASRHVQRAAGGVERADSVLSGLLRLLELGAQADDWVLVHDAARPNLTRGDLDRLLEELAEDPVGGLLAVPARDTLKRADRDGRVSETIDRSVVWLAYTPQMFRLGALHRALADALVAGVAITDEASAMEWAGYAPKLVEGRADNLKITTPEDLLRLQRSFPH.

The protein belongs to the IspD/TarI cytidylyltransferase family. IspD subfamily.

It catalyses the reaction 2-C-methyl-D-erythritol 4-phosphate + CTP + H(+) = 4-CDP-2-C-methyl-D-erythritol + diphosphate. The protein operates within isoprenoid biosynthesis; isopentenyl diphosphate biosynthesis via DXP pathway; isopentenyl diphosphate from 1-deoxy-D-xylulose 5-phosphate: step 2/6. Catalyzes the formation of 4-diphosphocytidyl-2-C-methyl-D-erythritol from CTP and 2-C-methyl-D-erythritol 4-phosphate (MEP). In Pseudomonas aeruginosa (strain UCBPP-PA14), this protein is 2-C-methyl-D-erythritol 4-phosphate cytidylyltransferase.